The sequence spans 203 residues: FMN-dependent NADH:quinone oxidoreductase (203 aa).

FMN is bound by residues Ser-9, Ser-15–Ser-17, and Ser-138–Gly-141.

This sequence belongs to the azoreductase type 1 family. Homodimer. The cofactor is FMN.

The catalysed reaction is 2 a quinone + NADH + H(+) = 2 a 1,4-benzosemiquinone + NAD(+). It carries out the reaction N,N-dimethyl-1,4-phenylenediamine + anthranilate + 2 NAD(+) = 2-(4-dimethylaminophenyl)diazenylbenzoate + 2 NADH + 2 H(+). Functionally, quinone reductase that provides resistance to thiol-specific stress caused by electrophilic quinones. In terms of biological role, also exhibits azoreductase activity. Catalyzes the reductive cleavage of the azo bond in aromatic azo compounds to the corresponding amines. In Methylorubrum populi (strain ATCC BAA-705 / NCIMB 13946 / BJ001) (Methylobacterium populi), this protein is FMN-dependent NADH:quinone oxidoreductase.